We begin with the raw amino-acid sequence, 1220 residues long: Polycomb protein Sfmbt (1220 aa).

The FCS-type zinc finger occupies 322–357 (PIQKDGMAVCKRCGAIGVKHTFYTKSRRFCSMACAR). Zn(2+)-binding residues include Cys331, Cys334, Cys351, and Cys355. Disordered stretches follow at residues 371–399 (GDQATTSSPDPGAGSESADLPGDQQQSQS) and 464–483 (DATAPGSTEEGASTPNSYLS). Residues 473–482 (EGASTPNSYL) are compositionally biased toward polar residues. MBT repeat units follow at residues 536 to 647 (YDWL…LIPP), 655 to 753 (KDWK…LAAP), 761 to 871 (LAGR…VTPP), and 879 to 975 (FTWE…LEGP). 2 disordered regions span residues 976 to 1024 (PRVA…IALK) and 1050 to 1092 (NNQP…AGSG). A compositionally biased stretch (basic residues) spans 991 to 1000 (KIQRKRKPKK). Over residues 1052-1068 (QPEEEGDEEDPDADGDG) the composition is skewed to acidic residues. Over residues 1071–1082 (STSHISEQSTTQ) the composition is skewed to polar residues. Residues 1083–1092 (SSSDLIAGSG) show a composition bias toward low complexity. Residues 1140-1203 (WNVYDVSQFL…SDLIAQLKCK (64 aa)) form the SAM domain.

Interacts with pho as a component of the pho-repressive complex (PhoRC).

It is found in the nucleus. Functionally, polycomb group (PcG) protein that binds to the Polycomb response elements (PREs) found in the regulatory regions of many genes. PcG proteins act by forming multiprotein complexes, which are required to maintain the transcriptionally repressive state of homeotic genes throughout development. PcG proteins are not required to initiate repression, but to maintain it during later stages of development. They probably act via the methylation of histones, rendering chromatin heritably changed in its expressibility. Necessary but not sufficient to recruit a functional PcG repressive complex that represses target genes, suggesting that the recruitment of the distinct PRC1 complex is also required to allow a subsequent repression. This Drosophila melanogaster (Fruit fly) protein is Polycomb protein Sfmbt.